The following is a 341-amino-acid chain: tRNA N6-adenosine threonylcarbamoyltransferase (341 aa).

Fe cation-binding residues include H111 and H115. Residues 133 to 137 (VVSGG), D166, G179, D183, and N271 each bind substrate. D299 serves as a coordination point for Fe cation.

Belongs to the KAE1 / TsaD family. It depends on Fe(2+) as a cofactor.

It is found in the cytoplasm. The enzyme catalyses L-threonylcarbamoyladenylate + adenosine(37) in tRNA = N(6)-L-threonylcarbamoyladenosine(37) in tRNA + AMP + H(+). Its function is as follows. Required for the formation of a threonylcarbamoyl group on adenosine at position 37 (t(6)A37) in tRNAs that read codons beginning with adenine. Is involved in the transfer of the threonylcarbamoyl moiety of threonylcarbamoyl-AMP (TC-AMP) to the N6 group of A37, together with TsaE and TsaB. TsaD likely plays a direct catalytic role in this reaction. The sequence is that of tRNA N6-adenosine threonylcarbamoyltransferase from Fusobacterium nucleatum subsp. nucleatum (strain ATCC 25586 / DSM 15643 / BCRC 10681 / CIP 101130 / JCM 8532 / KCTC 2640 / LMG 13131 / VPI 4355).